The following is a 145-amino-acid chain: Deoxyuridine 5'-triphosphate nucleotidohydrolase (145 aa).

Residues 63 to 65 (RSG), Q76, and 80 to 82 (TVD) each bind substrate.

Belongs to the dUTPase family. The cofactor is Mg(2+).

It carries out the reaction dUTP + H2O = dUMP + diphosphate + H(+). Its pathway is pyrimidine metabolism; dUMP biosynthesis; dUMP from dCTP (dUTP route): step 2/2. In terms of biological role, this enzyme is involved in nucleotide metabolism: it produces dUMP, the immediate precursor of thymidine nucleotides and it decreases the intracellular concentration of dUTP so that uracil cannot be incorporated into DNA. In Chlamydia trachomatis serovar L2 (strain ATCC VR-902B / DSM 19102 / 434/Bu), this protein is Deoxyuridine 5'-triphosphate nucleotidohydrolase.